The sequence spans 359 residues: Ras association domain-containing protein 7 (359 aa).

The Ras-associating domain maps to 6–89 (VAMELKVWVD…VQFVLRRTGP (84 aa)). Residues 87 to 123 (TGPSLSGRPSSDNCPPPERCPVRASLPPKPSAIPGRE) are disordered. Over residues 89 to 99 (PSLSGRPSSDN) the composition is skewed to polar residues. Coiled coils occupy residues 180 to 208 (WEQELQREQAREREGQARLQALSAATAEH) and 242 to 301 (AAER…QQFI). Residues 339–359 (SHILVSSLSPEVPPMRQSSWR) are disordered.

As to quaternary structure, interacts with MAP2K7 and GTP-bound NRAS. Polyubiquitinated and degraded by the proteasome upon prolonged stress stimuli.

It localises to the cytoplasm. Its subcellular location is the cytoskeleton. The protein resides in the microtubule organizing center. The protein localises to the centrosome. Functionally, negatively regulates stress-induced JNK activation and apoptosis by promoting MAP2K7 phosphorylation and inhibiting its ability to activate JNK. Following prolonged stress, anti-apoptotic effect stops because of degradation of RASSF7 protein via the ubiquitin-proteasome pathway. Required for the activation of AURKB and chromosomal congression during mitosis where it stimulates microtubule polymerization. The protein is Ras association domain-containing protein 7 (Rassf7) of Mus musculus (Mouse).